The sequence spans 274 residues: Tail assembly protein Gp25 (274 aa).

The tract at residues 221 to 250 is disordered; it reads NRDPKKPKPKAPKAYPRPDDFEKTTPKPGS. Positions 236-245 are enriched in basic and acidic residues; sequence PRPDDFEKTT.

The protein belongs to the L5likevirus tail assembly protein family. In terms of assembly, interacts with tail assembly protein Gp24 and tape measure protein.

Its function is as follows. Promotes tail assembly by creating a scaffold for the tail tube proteins. The tail assembly proteins Gp24 and Gp25 would wrap the linear tape measure protein to create a tail assembly scaffold. It would allow polymerization of tail tube protein during which Gp24 and Gp25 are released and therefore are absent from the mature virion. The tail assembly protein Gp25 is produced by a rare -1 ribosomal frameshift. The ratio Gp24/Gp25 is important for proper tail assembly. This Mycobacterium phage D29 (Mycobacteriophage D29) protein is Tail assembly protein Gp25 (25).